Consider the following 297-residue polypeptide: N-acetylneuraminate lyase (297 aa).

Residues serine 47 and threonine 48 each coordinate aceneuramate. Tyrosine 137 (proton donor) is an active-site residue. The active-site Schiff-base intermediate with substrate is the lysine 165. 5 residues coordinate aceneuramate: threonine 167, glycine 189, aspartate 191, glutamate 192, and serine 208.

Belongs to the DapA family. NanA subfamily. As to quaternary structure, homotetramer.

The protein localises to the cytoplasm. It carries out the reaction aceneuramate = aldehydo-N-acetyl-D-mannosamine + pyruvate. It functions in the pathway amino-sugar metabolism; N-acetylneuraminate degradation; D-fructose 6-phosphate from N-acetylneuraminate: step 1/5. Its function is as follows. Catalyzes the reversible aldol cleavage of N-acetylneuraminic acid (sialic acid; Neu5Ac) to form pyruvate and N-acetylmannosamine (ManNAc) via a Schiff base intermediate. The protein is N-acetylneuraminate lyase of Citrobacter koseri (strain ATCC BAA-895 / CDC 4225-83 / SGSC4696).